Consider the following 428-residue polypeptide: 3-phosphoshikimate 1-carboxyvinyltransferase (428 aa).

3-phosphoshikimate is bound by residues Lys21, Ser22, and Arg26. A phosphoenolpyruvate-binding site is contributed by Lys21. Positions 91 and 119 each coordinate phosphoenolpyruvate. 3-phosphoshikimate-binding residues include Ser164, Gln166, Asp313, and Lys340. Gln166 contributes to the phosphoenolpyruvate binding site. The active-site Proton acceptor is Asp313. Phosphoenolpyruvate contacts are provided by Arg344 and Arg386.

This sequence belongs to the EPSP synthase family. As to quaternary structure, monomer.

The protein resides in the cytoplasm. It carries out the reaction 3-phosphoshikimate + phosphoenolpyruvate = 5-O-(1-carboxyvinyl)-3-phosphoshikimate + phosphate. It participates in metabolic intermediate biosynthesis; chorismate biosynthesis; chorismate from D-erythrose 4-phosphate and phosphoenolpyruvate: step 6/7. Catalyzes the transfer of the enolpyruvyl moiety of phosphoenolpyruvate (PEP) to the 5-hydroxyl of shikimate-3-phosphate (S3P) to produce enolpyruvyl shikimate-3-phosphate and inorganic phosphate. This Campylobacter jejuni (strain RM1221) protein is 3-phosphoshikimate 1-carboxyvinyltransferase.